The following is a 517-amino-acid chain: GMP synthase [glutamine-hydrolyzing] (517 aa).

In terms of domain architecture, Glutamine amidotransferase type-1 spans 11–202 (KIIALDFGSQ…AFDVCGAKAN (192 aa)). The active-site Nucleophile is cysteine 88. Catalysis depends on residues histidine 176 and glutamate 178. The 190-residue stretch at 203–392 (WTMDDFIDMQ…LGIPHELVWR (190 aa)) folds into the GMPS ATP-PPase domain. An ATP-binding site is contributed by 230-236 (SGGVDSS).

In terms of assembly, homodimer.

The catalysed reaction is XMP + L-glutamine + ATP + H2O = GMP + L-glutamate + AMP + diphosphate + 2 H(+). Its pathway is purine metabolism; GMP biosynthesis; GMP from XMP (L-Gln route): step 1/1. Its function is as follows. Catalyzes the synthesis of GMP from XMP. The protein is GMP synthase [glutamine-hydrolyzing] of Limosilactobacillus reuteri (strain DSM 20016) (Lactobacillus reuteri).